A 364-amino-acid polypeptide reads, in one-letter code: uncharacterized protein (364 aa).

Residues 1 to 17 show a composition bias toward acidic residues; sequence MEPGELMEVDTSQELDE. The tract at residues 1–61 is disordered; the sequence is MEPGELMEVD…EEDQSSTETM (61 aa). Over residues 19–31 the composition is skewed to basic and acidic residues; sequence TSAKETDQPKDAQ.

This is an uncharacterized protein from Caenorhabditis elegans.